Reading from the N-terminus, the 392-residue chain is Bone morphogenetic protein 15 (392 aa).

The first 18 residues, 1–18 (MVLLSILRILFLCELVLF), serve as a signal peptide directing secretion. A propeptide spanning residues 19-267 (MEHRAQMAEG…ERESLLRRTR (249 aa)) is cleaved from the precursor. N-linked (GlcNAc...) asparagine glycans are attached at residues Asn87, Asn147, and Asn237. Position 268 is a pyrrolidone carboxylic acid; in P16 and P17 (Gln268). Ser273 bears the Phosphoserine; in P16 mark. Residue Thr277 is glycosylated (O-linked (HexNAc...) threonine; in P17). 3 disulfides stabilise this stretch: Cys291/Cys357, Cys320/Cys389, and Cys324/Cys391. Asn373 carries an N-linked (GlcNAc...) asparagine glycan.

Belongs to the TGF-beta family. Homodimer. But, in contrast to other members of this family, cannot be disulfide-linked.

It is found in the secreted. May be involved in follicular development. Oocyte-specific growth/differentiation factor that stimulates folliculogenesis and granulosa cell (GC) growth. This chain is Bone morphogenetic protein 15 (BMP15), found in Homo sapiens (Human).